The chain runs to 554 residues: Hydroxylamine reductase (554 aa).

[2Fe-2S] cluster contacts are provided by Cys-3, Cys-6, Cys-18, and Cys-25. 8 residues coordinate hybrid [4Fe-2O-2S] cluster: His-252, Glu-276, Cys-320, Cys-408, Cys-436, Cys-461, Glu-495, and Lys-497. Cys-408 bears the Cysteine persulfide mark.

The protein belongs to the HCP family. [2Fe-2S] cluster serves as cofactor. The cofactor is hybrid [4Fe-2O-2S] cluster.

The protein resides in the cytoplasm. It carries out the reaction A + NH4(+) + H2O = hydroxylamine + AH2 + H(+). Catalyzes the reduction of hydroxylamine to form NH(3) and H(2)O. This chain is Hydroxylamine reductase, found in Shewanella sp. (strain MR-4).